A 284-amino-acid chain; its full sequence is 2-dehydro-3-deoxyphosphooctonate aldolase (284 aa).

It belongs to the KdsA family.

The protein localises to the cytoplasm. The catalysed reaction is D-arabinose 5-phosphate + phosphoenolpyruvate + H2O = 3-deoxy-alpha-D-manno-2-octulosonate-8-phosphate + phosphate. It functions in the pathway carbohydrate biosynthesis; 3-deoxy-D-manno-octulosonate biosynthesis; 3-deoxy-D-manno-octulosonate from D-ribulose 5-phosphate: step 2/3. It participates in bacterial outer membrane biogenesis; lipopolysaccharide biosynthesis. This chain is 2-dehydro-3-deoxyphosphooctonate aldolase, found in Escherichia fergusonii (strain ATCC 35469 / DSM 13698 / CCUG 18766 / IAM 14443 / JCM 21226 / LMG 7866 / NBRC 102419 / NCTC 12128 / CDC 0568-73).